The primary structure comprises 111 residues: uncharacterized protein (111 aa).

Helical transmembrane passes span 4–21, 28–47, 51–73, and 80–102; these read FITA…FVSF, LVYF…YMIY, TGIR…VTAF, and SFFF…YLGM.

Its subcellular location is the cell membrane. This is an uncharacterized protein from Bacillus subtilis (strain 168).